The primary structure comprises 608 residues: Bifunctional dihydrofolate reductase-thymidylate synthase (608 aa).

Residues 10 to 228 enclose the DHFR domain; that stretch reads DIYAICACCK…TTLDFIIYKK (219 aa). 14–15 serves as a coordination point for substrate; it reads IC. An NADP(+)-binding site is contributed by alanine 16. Residue valine 31 participates in substrate binding. 39 to 45 lines the NADP(+) pocket; the sequence is GLGNKGV. Residues aspartate 54 and asparagine 108 each contribute to the substrate site. Residues 106-108, 128-130, and asparagine 144 each bind NADP(+); these read RTN and SRT. The substrate site is built by isoleucine 164, tyrosine 170, and threonine 185. 165 to 172 provides a ligand contact to NADP(+); the sequence is GGSVVYQE. The tract at residues 322-608 is thymidylate synthase; it reads YHPEYQYLNI…HEKISMDMAA (287 aa). Arginine 345 contributes to the dUMP binding site. Cysteine 490 is an active-site residue. Residues histidine 491, 509–513, asparagine 521, and 551–553 contribute to the dUMP site; these read QRSCD and HVY.

The protein in the N-terminal section; belongs to the dihydrofolate reductase family. This sequence in the C-terminal section; belongs to the thymidylate synthase family. In terms of assembly, homodimer.

The catalysed reaction is (6S)-5,6,7,8-tetrahydrofolate + NADP(+) = 7,8-dihydrofolate + NADPH + H(+). It carries out the reaction dUMP + (6R)-5,10-methylene-5,6,7,8-tetrahydrofolate = 7,8-dihydrofolate + dTMP. It functions in the pathway cofactor biosynthesis; tetrahydrofolate biosynthesis; 5,6,7,8-tetrahydrofolate from 7,8-dihydrofolate: step 1/1. Its function is as follows. Bifunctional enzyme. Involved in de novo dTMP biosynthesis. Key enzyme in folate metabolism. Catalyzes an essential reaction for de novo glycine and purine synthesis, DNA precursor synthesis, and for the conversion of dUMP to dTMP. The protein is Bifunctional dihydrofolate reductase-thymidylate synthase of Plasmodium falciparum (isolate K1 / Thailand).